A 365-amino-acid chain; its full sequence is WAT1-related protein At4g01430 (365 aa).

A run of 10 helical transmembrane segments spans residues 7–27, 39–59, 76–96, 100–120, 132–152, 183–203, 216–236, 250–270, 280–300, and 305–325; these read WAPV…NALV, IFGA…SYIW, FISG…GLSY, TVSM…ALIF, AGVL…LLTF, WLLG…WMLF, YSST…LSLY, FVIL…TVVT, VFVS…DFLI, and LYLG…VFLW. The EamA 1 domain occupies 20–151; that stretch reads MGSVNALVKK…ICIMGAMLLT (132 aa). The 109-residue stretch at 216-324 folds into the EamA 2 domain; the sequence is YSSTCLMSVF…VTITGLYVFL (109 aa). Positions 339-365 are disordered; it reads LNSSQFSQNKDNEDHTIANHKDTNLPV. A compositionally biased stretch (basic and acidic residues) spans 348–365; the sequence is KDNEDHTIANHKDTNLPV.

The protein belongs to the drug/metabolite transporter (DMT) superfamily. Plant drug/metabolite exporter (P-DME) (TC 2.A.7.4) family.

It is found in the membrane. The sequence is that of WAT1-related protein At4g01430 from Arabidopsis thaliana (Mouse-ear cress).